Here is a 396-residue protein sequence, read N- to C-terminus: Flavohemoprotein (396 aa).

A Globin domain is found at 1 to 136; that stretch reads MLDNHTIAIV…LANVFIQRED (136 aa). H85 serves as a coordination point for heme b. Catalysis depends on charge relay system residues Y95 and E135. Residues 147–396 form a reductase region; the sequence is GGWSGVRPFR…YECFGPHKVV (250 aa). An FAD-binding FR-type domain is found at 150–255; it reads SGVRPFRIVN…AAPHGDFFLD (106 aa). Residues Y188 and 204–207 contribute to the FAD site; that span reads RQYS. 268 to 273 lines the NADP(+) pocket; that stretch reads GVGQTP. 389–392 contacts FAD; it reads CFGP.

It belongs to the globin family. Two-domain flavohemoproteins subfamily. This sequence in the C-terminal section; belongs to the flavoprotein pyridine nucleotide cytochrome reductase family. The cofactor is heme b. FAD is required as a cofactor.

The enzyme catalyses 2 nitric oxide + NADPH + 2 O2 = 2 nitrate + NADP(+) + H(+). It catalyses the reaction 2 nitric oxide + NADH + 2 O2 = 2 nitrate + NAD(+) + H(+). Is involved in NO detoxification in an aerobic process, termed nitric oxide dioxygenase (NOD) reaction that utilizes O(2) and NAD(P)H to convert NO to nitrate, which protects the bacterium from various noxious nitrogen compounds. Therefore, plays a central role in the inducible response to nitrosative stress. The protein is Flavohemoprotein of Pectobacterium atrosepticum (strain SCRI 1043 / ATCC BAA-672) (Erwinia carotovora subsp. atroseptica).